We begin with the raw amino-acid sequence, 206 residues long: FMN-dependent NADH:quinone oxidoreductase (206 aa).

Residues serine 10 and serine 15–serine 17 each bind FMN.

It belongs to the azoreductase type 1 family. Homodimer. FMN is required as a cofactor.

It catalyses the reaction 2 a quinone + NADH + H(+) = 2 a 1,4-benzosemiquinone + NAD(+). It carries out the reaction N,N-dimethyl-1,4-phenylenediamine + anthranilate + 2 NAD(+) = 2-(4-dimethylaminophenyl)diazenylbenzoate + 2 NADH + 2 H(+). In terms of biological role, quinone reductase that provides resistance to thiol-specific stress caused by electrophilic quinones. Functionally, also exhibits azoreductase activity. Catalyzes the reductive cleavage of the azo bond in aromatic azo compounds to the corresponding amines. In Acidobacterium capsulatum (strain ATCC 51196 / DSM 11244 / BCRC 80197 / JCM 7670 / NBRC 15755 / NCIMB 13165 / 161), this protein is FMN-dependent NADH:quinone oxidoreductase.